Consider the following 84-residue polypeptide: Small ribosomal subunit protein uS17 (84 aa).

This sequence belongs to the universal ribosomal protein uS17 family. In terms of assembly, part of the 30S ribosomal subunit.

One of the primary rRNA binding proteins, it binds specifically to the 5'-end of 16S ribosomal RNA. The protein is Small ribosomal subunit protein uS17 of Clostridium beijerinckii (strain ATCC 51743 / NCIMB 8052) (Clostridium acetobutylicum).